Here is a 178-residue protein sequence, read N- to C-terminus: Transcription termination/antitermination protein NusG (178 aa).

One can recognise a KOW domain in the interval 130–159; that stretch reads SVKVKEGPFANFIGTIEEIQLDKRKLKVHV.

It belongs to the NusG family.

Functionally, participates in transcription elongation, termination and antitermination. The chain is Transcription termination/antitermination protein NusG from Halalkalibacterium halodurans (strain ATCC BAA-125 / DSM 18197 / FERM 7344 / JCM 9153 / C-125) (Bacillus halodurans).